We begin with the raw amino-acid sequence, 309 residues long: NAD kinase (309 aa).

Asp-89 functions as the Proton acceptor in the catalytic mechanism. NAD(+)-binding positions include 89 to 90 (DG), 163 to 164 (NE), His-174, Arg-191, Asp-193, and 204 to 209 (TAYALS).

The protein belongs to the NAD kinase family. A divalent metal cation is required as a cofactor.

It localises to the cytoplasm. It carries out the reaction NAD(+) + ATP = ADP + NADP(+) + H(+). Its function is as follows. Involved in the regulation of the intracellular balance of NAD and NADP, and is a key enzyme in the biosynthesis of NADP. Catalyzes specifically the phosphorylation on 2'-hydroxyl of the adenosine moiety of NAD to yield NADP. This chain is NAD kinase, found in Shewanella baltica (strain OS155 / ATCC BAA-1091).